Here is a 263-residue protein sequence, read N- to C-terminus: Neurovirulence factor ICP34.5 (263 aa).

Over residues 1–14 (MARRRRHRGPRRPR) the composition is skewed to basic residues. The segment at 1-16 (MARRRRHRGPRRPRPP) is required for nucleolar localization. Disordered stretches follow at residues 1–128 (MARR…PFRL) and 149–190 (RRAG…PATP). Residues 24–35 (TAQSQVTSTPNS) are compositionally biased toward polar residues. A compositionally biased stretch (pro residues) spans 45–58 (AAPPPPPASGPPPS). A compositionally biased stretch (acidic residues) spans 73 to 83 (ASDDDDDDDWP). 2 stretches are compositionally biased toward pro residues: residues 84-93 (DSPPPEPAPE) and 119-128 (SHPPSRPFRL). The Nuclear export signal signature appears at 128-137 (LPPRLALRLR). 10 consecutive repeat copies span residues 161-163 (ATP), 164-166 (ATP), 167-169 (ATP), 170-172 (ATP), 173-175 (ATP), 176-178 (ATP), 179-181 (ATP), 182-184 (ATP), 185-187 (ATP), and 188-190 (ATP). Residues 161–190 (ATPATPATPATPATPATPATPATPATPATP) are 10 X 3 AA tandem repeats of A-T-P. A compositionally biased stretch (low complexity) spans 164-190 (ATPATPATPATPATPATPATPATPATP). An interaction with host PPP1CA region spans residues 190 to 203 (PARVRFSPHVRVRH). Residues 205 to 263 (VVWASAARLARRGSWARERADRARFRRRVAEAEAVIGPCLGPEARARALARGAGPANSV) are important for interferon resistance. The short motif at 215-233 (RRGSWARERADRARFRRRV) is the Bipartite nuclear localization signal element. The tract at residues 233–248 (VAEAEAVIGPCLGPEA) is interaction with host EIF2S1/EIF-2ALPHA.

Belongs to the PPP1R15 family. In terms of assembly, interacts with host PPP1CA; this interaction to forms a high-molecular-weight complex that dephosphorylates EIF2S1/eIF-2alpha. Interacts with host EIF2S1/eIF-2alpha; this interaction is crucial for the specific dephosphorylation of EIF2S1/eIF-2alpha by PPP1CA. Binds to proliferating cell nuclear antigen (PCNA), which may release host cells from growth arrest and facilitate viral replication. Interacts (via N-terminus) with host C1QBP; this interaction allows C1QBP to be recruited to the inner nuclear membrane by ICP34.5. Interacts with host PRKCA. Interacts with protein UL31. Interacts with host STING/TMEM173; this interaction inhibits the intracellular DNA sensing pathway. Interacts with host BECN1; this interaction modulates host autophagy.

The protein localises to the host cytoplasm. The protein resides in the host nucleus. It is found in the host nucleolus. It localises to the virion. Functionally, inhibits the establishment of the immune response and of the integrated stress response (ISR) in the infected cell. Plays essential roles in viral nuclear egress to mediate capsid transit across the nuclear membrane. Facilitates nuclear egress cooperatively with host C1QBP and protein kinase C/PKC to induce lamin A/C phosphorylation and subsequent reorganization. In turn, lamina disassembles and nuclear egress occurs. Recruits the serine/threonine protein phosphatase PPP1CA/PP1-alpha to dephosphorylate the translation initiation factor EIF2S1/eIF-2alpha, thereby couteracting the host shutoff of protein synthesis involving double-stranded RNA-dependent protein kinase EIF2AK2/PKR. In turn, controls host IRF3 activation and subsequently inhibits host interferon response. Controls the DNA sensing pathway by interacting with and inhibiting host STING/TMEM173. Also down-modulates the host MHC class II proteins cell surface expression. Acts as a neurovirulence factor that has a profound effect on the growth of the virus in central nervous system tissue, by interacting with host BECN1 and thereby antagonizing the host autophagy response. The polypeptide is Neurovirulence factor ICP34.5 (RL1) (Human herpesvirus 1 (strain F) (HHV-1)).